We begin with the raw amino-acid sequence, 378 residues long: Probable selenide, water dikinase (378 aa).

Residue Cys33 is part of the active site. ATP is bound by residues Lys36, 63–65, Asp83, Asp106, and 158–160; these read GLD and GQT. Asp65 contributes to the Mg(2+) binding site. Asp106 provides a ligand contact to Mg(2+). Asp260 contacts Mg(2+).

Belongs to the selenophosphate synthase 1 family. Class I subfamily. Homodimer. Mg(2+) serves as cofactor.

The enzyme catalyses hydrogenselenide + ATP + H2O = selenophosphate + AMP + phosphate + 2 H(+). Synthesizes selenophosphate from selenide and ATP. This chain is Probable selenide, water dikinase (seld-1), found in Caenorhabditis elegans.